Here is a 228-residue protein sequence, read N- to C-terminus: Lipoprotein-releasing system ATP-binding protein LolD (228 aa).

The ABC transporter domain maps to 6-228 (LRLSGIEKTY…LSDGRLSAES (223 aa)). 43–50 (APSGAGKS) is an ATP binding site.

Belongs to the ABC transporter superfamily. Lipoprotein translocase (TC 3.A.1.125) family. The complex is composed of two ATP-binding proteins (LolD) and two transmembrane proteins (LolC and LolE).

The protein resides in the cell inner membrane. In terms of biological role, part of the ABC transporter complex LolCDE involved in the translocation of mature outer membrane-directed lipoproteins, from the inner membrane to the periplasmic chaperone, LolA. Responsible for the formation of the LolA-lipoprotein complex in an ATP-dependent manner. This Ruegeria pomeroyi (strain ATCC 700808 / DSM 15171 / DSS-3) (Silicibacter pomeroyi) protein is Lipoprotein-releasing system ATP-binding protein LolD.